Consider the following 181-residue polypeptide: ATP-dependent protease subunit HslV (181 aa).

The active site involves T9. The Na(+) site is built by S166, C169, and T172.

The protein belongs to the peptidase T1B family. HslV subfamily. A double ring-shaped homohexamer of HslV is capped on each side by a ring-shaped HslU homohexamer. The assembly of the HslU/HslV complex is dependent on binding of ATP.

The protein localises to the cytoplasm. It catalyses the reaction ATP-dependent cleavage of peptide bonds with broad specificity.. With respect to regulation, allosterically activated by HslU binding. In terms of biological role, protease subunit of a proteasome-like degradation complex believed to be a general protein degrading machinery. The protein is ATP-dependent protease subunit HslV of Staphylococcus haemolyticus (strain JCSC1435).